Consider the following 296-residue polypeptide: Small ribosomal subunit protein uS2 (296 aa).

Positions 252 to 296 (TSSKTVSKLKQSKKLSKTQNIDEETNTEFDQALGGACENNNSDNT) are disordered.

This sequence belongs to the universal ribosomal protein uS2 family.

The protein is Small ribosomal subunit protein uS2 (rpsB) of Rickettsia prowazekii (strain Madrid E).